Reading from the N-terminus, the 485-residue chain is NADH-quinone oxidoreductase subunit N (485 aa).

Transmembrane regions (helical) follow at residues 8–28, 35–55, 75–95, 105–125, 127–147, 159–179, 203–223, 235–255, 271–291, 297–317, 326–346, 374–394, 408–427, and 455–475; these read LIALLPLLIVGLTVVVVMLSI, FLNATLSVVGLNAALLSLWFV, LYTGLVLLASLATCTFAYPWL, FYLLVLIAALGGILLANANHL, SLFLGIELISLPLFGLVGYAF, YTILSAAASSFLLFGMALVYA, LLAGLGLMIVGLGFKLSLVPF, PAPVSTFLATASKIAIFGVVM, VVLGVLAFASILFGNLMALTQ, LLGYSSISHLGYLLVALIALK, VGVYLAGYLFSSLGAFGVVSL, AVMTVMMLSLAGIPMTLGFIG, WWLTGAVVVGSAIGLYYYLR, and VVVLISALLVLVLGVWPQPLI.

The protein belongs to the complex I subunit 2 family. NDH-1 is composed of 13 different subunits. Subunits NuoA, H, J, K, L, M, N constitute the membrane sector of the complex.

The protein localises to the cell inner membrane. The enzyme catalyses a quinone + NADH + 5 H(+)(in) = a quinol + NAD(+) + 4 H(+)(out). Functionally, NDH-1 shuttles electrons from NADH, via FMN and iron-sulfur (Fe-S) centers, to quinones in the respiratory chain. The immediate electron acceptor for the enzyme in this species is believed to be ubiquinone. Couples the redox reaction to proton translocation (for every two electrons transferred, four hydrogen ions are translocated across the cytoplasmic membrane), and thus conserves the redox energy in a proton gradient. In Cronobacter sakazakii (strain ATCC BAA-894) (Enterobacter sakazakii), this protein is NADH-quinone oxidoreductase subunit N.